The sequence spans 321 residues: GDP-L-fucose synthase (321 aa).

14-20 (GGSGLVG) is an NADP(+) binding site. The active-site Proton donor/acceptor is Tyr143. Residues Lys147, 170–173 (PTNV), and His186 each bind NADP(+). Lys194, Trp208, Arg215, and Asp277 together coordinate substrate.

This sequence belongs to the NAD(P)-dependent epimerase/dehydratase family. Fucose synthase subfamily. Homodimer.

The catalysed reaction is GDP-beta-L-fucose + NADP(+) = GDP-4-dehydro-alpha-D-rhamnose + NADPH + H(+). It functions in the pathway nucleotide-sugar biosynthesis; GDP-L-fucose biosynthesis via de novo pathway; GDP-L-fucose from GDP-alpha-D-mannose: step 2/2. In terms of biological role, catalyzes the two-step NADP-dependent conversion of GDP-4-dehydro-6-deoxy-D-mannose to GDP-fucose, involving an epimerase and a reductase reaction. The chain is GDP-L-fucose synthase (GFUS) from Cricetulus griseus (Chinese hamster).